A 158-amino-acid chain; its full sequence is Large ribosomal subunit protein uL30 (158 aa).

It belongs to the universal ribosomal protein uL30 family. In terms of assembly, part of the 50S ribosomal subunit.

The polypeptide is Large ribosomal subunit protein uL30 (Saccharolobus islandicus (strain Y.N.15.51 / Yellowstone #2) (Sulfolobus islandicus)).